The following is a 396-amino-acid chain: CCA-adding enzyme (396 aa).

ATP is bound by residues G32 and R35. G32 and R35 together coordinate CTP. Mg(2+) contacts are provided by D45 and D47. Residues R116, D159, R162, R165, and R168 each coordinate ATP. 5 residues coordinate CTP: R116, D159, R162, R165, and R168.

This sequence belongs to the tRNA nucleotidyltransferase/poly(A) polymerase family. Bacterial CCA-adding enzyme type 3 subfamily. As to quaternary structure, homodimer. Mg(2+) is required as a cofactor.

It carries out the reaction a tRNA precursor + 2 CTP + ATP = a tRNA with a 3' CCA end + 3 diphosphate. The catalysed reaction is a tRNA with a 3' CCA end + 2 CTP + ATP = a tRNA with a 3' CCACCA end + 3 diphosphate. Catalyzes the addition and repair of the essential 3'-terminal CCA sequence in tRNAs without using a nucleic acid template. Adds these three nucleotides in the order of C, C, and A to the tRNA nucleotide-73, using CTP and ATP as substrates and producing inorganic pyrophosphate. tRNA 3'-terminal CCA addition is required both for tRNA processing and repair. Also involved in tRNA surveillance by mediating tandem CCA addition to generate a CCACCA at the 3' terminus of unstable tRNAs. While stable tRNAs receive only 3'-terminal CCA, unstable tRNAs are marked with CCACCA and rapidly degraded. In Lactobacillus delbrueckii subsp. bulgaricus (strain ATCC 11842 / DSM 20081 / BCRC 10696 / JCM 1002 / NBRC 13953 / NCIMB 11778 / NCTC 12712 / WDCM 00102 / Lb 14), this protein is CCA-adding enzyme.